We begin with the raw amino-acid sequence, 483 residues long: Proline--tRNA ligase (483 aa).

Belongs to the class-II aminoacyl-tRNA synthetase family. ProS type 3 subfamily. Homodimer.

The protein localises to the cytoplasm. It catalyses the reaction tRNA(Pro) + L-proline + ATP = L-prolyl-tRNA(Pro) + AMP + diphosphate. Its function is as follows. Catalyzes the attachment of proline to tRNA(Pro) in a two-step reaction: proline is first activated by ATP to form Pro-AMP and then transferred to the acceptor end of tRNA(Pro). The sequence is that of Proline--tRNA ligase from Sulfolobus acidocaldarius (strain ATCC 33909 / DSM 639 / JCM 8929 / NBRC 15157 / NCIMB 11770).